The following is a 184-amino-acid chain: Type-1 fimbrial protein, A chain (184 aa).

A signal peptide spans 1 to 23 (MKIKTLAIVVLSALSLSSTAALA). Cys46 and Cys86 are disulfide-bonded.

This sequence belongs to the fimbrial protein family.

It localises to the fimbrium. Functionally, fimbriae (also called pili), polar filaments radiating from the surface of the bacterium to a length of 0.5-1.5 micrometers and numbering 100-300 per cell, enable bacteria to colonize the epithelium of specific host organs. The chain is Type-1 fimbrial protein, A chain from Escherichia coli.